The sequence spans 381 residues: Alkanesulfonate monooxygenase (381 aa).

It belongs to the SsuD family. In terms of assembly, homotetramer.

It catalyses the reaction an alkanesulfonate + FMNH2 + O2 = an aldehyde + FMN + sulfite + H2O + 2 H(+). Functionally, catalyzes the desulfonation of aliphatic sulfonates. This chain is Alkanesulfonate monooxygenase, found in Escherichia coli O17:K52:H18 (strain UMN026 / ExPEC).